Reading from the N-terminus, the 240-residue chain is UDP-2,3-diacylglucosamine hydrolase (240 aa).

The Mn(2+) site is built by aspartate 8, histidine 10, aspartate 41, asparagine 79, and histidine 114. A substrate-binding site is contributed by asparagine 79–arginine 80. Positions 122, 160, 164, 167, and 195 each coordinate substrate. Histidine 195 and histidine 197 together coordinate Mn(2+).

It belongs to the LpxH family. Mn(2+) is required as a cofactor.

It localises to the cell inner membrane. The protein resides in the cytoplasm. The enzyme catalyses UDP-2-N,3-O-bis[(3R)-3-hydroxytetradecanoyl]-alpha-D-glucosamine + H2O = 2-N,3-O-bis[(3R)-3-hydroxytetradecanoyl]-alpha-D-glucosaminyl 1-phosphate + UMP + 2 H(+). It functions in the pathway glycolipid biosynthesis; lipid IV(A) biosynthesis; lipid IV(A) from (3R)-3-hydroxytetradecanoyl-[acyl-carrier-protein] and UDP-N-acetyl-alpha-D-glucosamine: step 4/6. Inhibited by a sulfonyl piperazine compound that shows antibacterial activity against E.coli; LpxH is the cellular target of this compound. Inhibited by 0.01% (or more) Triton X-100 in vitro. Functionally, hydrolyzes the pyrophosphate bond of UDP-2,3-diacylglucosamine to yield 2,3-diacylglucosamine 1-phosphate (lipid X) and UMP by catalyzing the attack of water at the alpha-P atom. Involved in the biosynthesis of lipid A, a phosphorylated glycolipid that anchors the lipopolysaccharide to the outer membrane of the cell. Is essential for E.coli growth. Does not cleave the unacylated UDP-GlcNAc, the mono-acylated UDP-3-O-(R)-3-hydroxymyristoyl-GlcNAc, and CDP-diacylglycerol. The protein is UDP-2,3-diacylglucosamine hydrolase of Escherichia coli (strain K12).